We begin with the raw amino-acid sequence, 245 residues long: Sugar fermentation stimulation protein homolog (245 aa).

It belongs to the SfsA family.

The polypeptide is Sugar fermentation stimulation protein homolog (Yersinia pestis bv. Antiqua (strain Nepal516)).